An 805-amino-acid polypeptide reads, in one-letter code: Leucine--tRNA ligase (805 aa).

The short motif at 40–51 is the 'HIGH' region element; it reads PYPSGSGLHVGH. The 'KMSKS' region signature appears at 576 to 580; that stretch reads KMSKS. Lysine 579 contributes to the ATP binding site.

The protein belongs to the class-I aminoacyl-tRNA synthetase family.

The protein resides in the cytoplasm. The enzyme catalyses tRNA(Leu) + L-leucine + ATP = L-leucyl-tRNA(Leu) + AMP + diphosphate. The chain is Leucine--tRNA ligase from Chlorobium limicola (strain DSM 245 / NBRC 103803 / 6330).